The chain runs to 99 residues: Putative UPF0320 protein YDR543C (99 aa).

Residues 80 to 99 (EKSPPKSPKHKNILSFNNNT) are disordered.

Belongs to the UPF0320 family.

The chain is Putative UPF0320 protein YDR543C from Saccharomyces cerevisiae (strain ATCC 204508 / S288c) (Baker's yeast).